The chain runs to 114 residues: Large ribosomal subunit protein bL20c (114 aa).

It belongs to the bacterial ribosomal protein bL20 family.

It localises to the plastid. In terms of biological role, binds directly to 23S ribosomal RNA and is necessary for the in vitro assembly process of the 50S ribosomal subunit. It is not involved in the protein synthesizing functions of that subunit. In Prototheca wickerhamii, this protein is Large ribosomal subunit protein bL20c.